Consider the following 348-residue polypeptide: Lipopolysaccharide heptosyltransferase 2 (348 aa).

Belongs to the glycosyltransferase 9 family.

The catalysed reaction is an L-alpha-D-Hep-(1-&gt;5)-[alpha-Kdo-(2-&gt;4)]-alpha-Kdo-(2-&gt;6)-lipid A + ADP-L-glycero-beta-D-manno-heptose = an L-alpha-D-Hep-(1-&gt;3)-L-alpha-D-Hep-(1-&gt;5)-[alpha-Kdo-(2-&gt;4)]-alpha-Kdo-(2-&gt;6)-lipid A + ADP + H(+). It carries out the reaction L-alpha-D-Hep-(1-&gt;5)-[alpha-Kdo-(2-&gt;4)]-alpha-Kdo-(2-&gt;6)-lipid A (E. coli) + ADP-L-glycero-beta-D-manno-heptose = L-alpha-D-Hep-(1-&gt;3)-L-alpha-D-Hep-(1-&gt;5)-[alpha-Kdo-(2-&gt;4)]-alpha-Kdo-(2-&gt;6)-lipid A (E. coli) + ADP + H(+). It participates in bacterial outer membrane biogenesis; LPS core biosynthesis. In terms of biological role, glycosyltransferase involved in the biosynthesis of the core oligosaccharide region of lipopolysaccharide (LPS). Catalyzes the addition of the second heptose unit to the heptosyl-Kdo2-lipid A module. The analog ADP-mannose can serve as an alternative donor in place of ADP-L-glycero-D-manno-heptose, but with lower efficiency. This chain is Lipopolysaccharide heptosyltransferase 2, found in Escherichia coli (strain K12).